Reading from the N-terminus, the 137-residue chain is Basic phospholipase A2 beta-bungarotoxin A5 chain (137 aa).

Residues 1 to 9 (AVCVSLLGA) form the signal peptide. A propeptide spanning residues 10-17 (ANIPPQHL) is cleaved from the precursor. Intrachain disulfides connect cysteine 44/cysteine 136, cysteine 46/cysteine 62, cysteine 61/cysteine 117, cysteine 68/cysteine 110, cysteine 78/cysteine 103, and cysteine 96/cysteine 108. Tyrosine 45, glycine 47, and glycine 49 together coordinate Ca(2+). Histidine 65 is a catalytic residue. Aspartate 66 serves as a coordination point for Ca(2+). The active site involves aspartate 111.

The protein belongs to the phospholipase A2 family. Group I subfamily. D49 sub-subfamily. In terms of assembly, heterodimer; disulfide-linked. The A chains have phospholipase A2 activity and the B chains show homology with the basic protease inhibitors. Ca(2+) is required as a cofactor. In terms of tissue distribution, expressed by the venom gland.

The protein localises to the secreted. It carries out the reaction a 1,2-diacyl-sn-glycero-3-phosphocholine + H2O = a 1-acyl-sn-glycero-3-phosphocholine + a fatty acid + H(+). Snake venom phospholipase A2 (PLA2) that inhibits neuromuscular transmission by blocking acetylcholine release from the nerve termini. PLA2 catalyzes the calcium-dependent hydrolysis of the 2-acyl groups in 3-sn-phosphoglycerides. This Bungarus multicinctus (Many-banded krait) protein is Basic phospholipase A2 beta-bungarotoxin A5 chain.